Reading from the N-terminus, the 512-residue chain is MTIILKPGEVTLSELEAIYFNGEISKLHHDTHLVIERGAQRIAEIVAGSEPVYGINTGFGKLASIKIDADKVTVLQRNLILSHCCGVGDPLAENIVRLIMSLKLISLGRGASGVRLELVNLLENMLEKGVIPVIPEKGSVGASGDLAPLAHMAAVMMGEGEAFFQNIRMSGALALEKAGLSPIILEAKEGLALINGTQTSTALALAGLFRAYRALCGGLLAGALTTDATMGSTAPFHPDIHILRGHYGQIAVSKTLEKLVEDSEIRAAHLRGDERVQDPYCIRCQPQVMGACFDILLAAAKTLIIEANAVTDNPLILRNGEVVSGGNFHAEPVAFAADQIALALCEIGSISQRRIALMVDPAVSYGLPAFLAHNAGLNSGFMIAEVTAAALMSENKQMAYPASVDSTPTSANQEDHVSMACHGARRLLVMSENLFTLIGIETLIATQGIEYRAPLKTSTLLQSVMECLRKNIASLKEDRYLAPDLHQVHILVREGHLLSVLPETIFPSLSFQ.

A cross-link (5-imidazolinone (Ala-Gly)) is located at residues 142-144 (ASG). S143 carries the post-translational modification 2,3-didehydroalanine (Ser).

Belongs to the PAL/histidase family. In terms of processing, contains an active site 4-methylidene-imidazol-5-one (MIO), which is formed autocatalytically by cyclization and dehydration of residues Ala-Ser-Gly.

The protein resides in the cytoplasm. The enzyme catalyses L-histidine = trans-urocanate + NH4(+). It functions in the pathway amino-acid degradation; L-histidine degradation into L-glutamate; N-formimidoyl-L-glutamate from L-histidine: step 1/3. In Bartonella tribocorum (strain CIP 105476 / IBS 506), this protein is Histidine ammonia-lyase.